We begin with the raw amino-acid sequence, 156 residues long: Cyanate hydratase (156 aa).

Residues arginine 96, glutamate 99, and serine 122 contribute to the active site.

This sequence belongs to the cyanase family.

The enzyme catalyses cyanate + hydrogencarbonate + 3 H(+) = NH4(+) + 2 CO2. In terms of biological role, catalyzes the reaction of cyanate with bicarbonate to produce ammonia and carbon dioxide. This is Cyanate hydratase from Mycobacteroides abscessus (strain ATCC 19977 / DSM 44196 / CCUG 20993 / CIP 104536 / JCM 13569 / NCTC 13031 / TMC 1543 / L948) (Mycobacterium abscessus).